The primary structure comprises 246 residues: MSKAVIVIPARYGSSRLPGKPLLDIVGKPMIQHVYERALQVAGVAEVWVATDDPRVEQAVQAFGGKAIMTRNDHESGTDRLVEVMHKVEADIYINLQGDEPMIRPRDVETLLQGMRDDPALPVATLCHAISAAEAAEPSTVKVVVNTRQDALYFSRSPIPYPRNAEKARYLKHVGIYAYRRDVLQNYSQLPESMPEQAESLEQLRLMNAGINIRTFEVAATGPGVDTPACLEKVRALMAQELAENA.

Belongs to the KdsB family. Homodimer.

Its subcellular location is the cytoplasm. The catalysed reaction is 3-deoxy-alpha-D-manno-oct-2-ulosonate + CTP = CMP-3-deoxy-beta-D-manno-octulosonate + diphosphate. It participates in nucleotide-sugar biosynthesis; CMP-3-deoxy-D-manno-octulosonate biosynthesis; CMP-3-deoxy-D-manno-octulosonate from 3-deoxy-D-manno-octulosonate and CTP: step 1/1. The protein operates within bacterial outer membrane biogenesis; lipopolysaccharide biosynthesis. Its function is as follows. Activates KDO (a required 8-carbon sugar) for incorporation into bacterial lipopolysaccharide in Gram-negative bacteria. The protein is 3-deoxy-manno-octulosonate cytidylyltransferase (kpsU) of Escherichia coli.